The following is a 32-amino-acid chain: Mu-theraphotoxin-Se1a (32 aa).

Disulfide bonds link C2–C17, C9–C22, and C16–C28.

It belongs to the neurotoxin 10 (Hwtx-1) family. As to expression, expressed by the venom gland.

The protein localises to the secreted. In terms of biological role, voltage-gated sodium channel Nav1.7/SCN9A inhibitor. The polypeptide is Mu-theraphotoxin-Se1a (Selenocosmia effera (Tarantula spider)).